We begin with the raw amino-acid sequence, 279 residues long: ESX-1 secretion-associated protein EspG1 (279 aa).

It belongs to the EspG family. In terms of assembly, interacts specifically with ESX-1-dependent PE/PPE proteins.

It localises to the cytoplasm. Functionally, specific chaperone for cognate PE/PPE proteins. Plays an important role in preventing aggregation of PE/PPE dimers. This is ESX-1 secretion-associated protein EspG1 from Mycobacterium marinum (strain ATCC BAA-535 / M).